Reading from the N-terminus, the 157-residue chain is Small ribosomal subunit protein uS7 (157 aa).

Belongs to the universal ribosomal protein uS7 family. In terms of assembly, part of the 30S ribosomal subunit. Contacts proteins S9 and S11.

One of the primary rRNA binding proteins, it binds directly to 16S rRNA where it nucleates assembly of the head domain of the 30S subunit. Is located at the subunit interface close to the decoding center, probably blocks exit of the E-site tRNA. In Salinibacter ruber (strain DSM 13855 / M31), this protein is Small ribosomal subunit protein uS7.